Here is a 331-residue protein sequence, read N- to C-terminus: tRNA U34 carboxymethyltransferase (331 aa).

Carboxy-S-adenosyl-L-methionine contacts are provided by residues lysine 91, tryptophan 105, lysine 110, glycine 130, 152–154 (DPS), 181–182 (IE), methionine 196, tyrosine 200, and arginine 315.

The protein belongs to the class I-like SAM-binding methyltransferase superfamily. CmoB family. Homotetramer.

The enzyme catalyses carboxy-S-adenosyl-L-methionine + 5-hydroxyuridine(34) in tRNA = 5-carboxymethoxyuridine(34) in tRNA + S-adenosyl-L-homocysteine + H(+). Its function is as follows. Catalyzes carboxymethyl transfer from carboxy-S-adenosyl-L-methionine (Cx-SAM) to 5-hydroxyuridine (ho5U) to form 5-carboxymethoxyuridine (cmo5U) at position 34 in tRNAs. This Shewanella baltica (strain OS155 / ATCC BAA-1091) protein is tRNA U34 carboxymethyltransferase.